A 259-amino-acid chain; its full sequence is Flap endonuclease Xni (259 aa).

Mg(2+) is bound at residue Asp109. Residues 165-255 (LKPEQLADYW…FNLQDIRYEK (91 aa)) enclose the 5'-3' exonuclease domain. Residues Leu176, Ala177, Ile187, and Val190 each coordinate K(+). The segment at 189–194 (GVGPKA) is interaction with DNA.

This sequence belongs to the Xni family. Mg(2+) is required as a cofactor. It depends on K(+) as a cofactor.

In terms of biological role, has flap endonuclease activity. During DNA replication, flap endonucleases cleave the 5'-overhanging flap structure that is generated by displacement synthesis when DNA polymerase encounters the 5'-end of a downstream Okazaki fragment. The sequence is that of Flap endonuclease Xni from Aliivibrio fischeri (strain ATCC 700601 / ES114) (Vibrio fischeri).